Consider the following 372-residue polypeptide: Heat shock 70 kDa protein II (372 aa).

Belongs to the heat shock protein 70 family.

In Paracentrotus lividus (Common sea urchin), this protein is Heat shock 70 kDa protein II (HSP70II).